A 399-amino-acid polypeptide reads, in one-letter code: Elongation factor Tu (399 aa).

The 200-residue stretch at 10 to 209 (KPHVNIGTIG…AVDSYIPTPV (200 aa)) folds into the tr-type G domain. Positions 19–26 (GHVDHGKT) are G1. 19–26 (GHVDHGKT) is a GTP binding site. T26 contributes to the Mg(2+) binding site. The tract at residues 60–64 (GITIA) is G2. The tract at residues 81 to 84 (DCPG) is G3. Residues 81 to 85 (DCPGH) and 136 to 139 (NKAD) each bind GTP. Residues 136–139 (NKAD) form a G4 region. Residues 174–176 (SAL) form a G5 region.

The protein belongs to the TRAFAC class translation factor GTPase superfamily. Classic translation factor GTPase family. EF-Tu/EF-1A subfamily. In terms of assembly, monomer.

It is found in the cytoplasm. The catalysed reaction is GTP + H2O = GDP + phosphate + H(+). Its function is as follows. GTP hydrolase that promotes the GTP-dependent binding of aminoacyl-tRNA to the A-site of ribosomes during protein biosynthesis. In Campylobacter concisus (strain 13826), this protein is Elongation factor Tu.